We begin with the raw amino-acid sequence, 148 residues long: MTIIEVKIKKLENFSGNLPAYATEHSAGVDLIAANEQTILIKVGSIQLIPTGIAIALPDSFEAQIRPRSGLAIKHGITVANSPGTIDADYRGEIKVLLINLGKKDFLIERGMRIAQMIIAKYERVLWAETSILTETMRGRGGFGSTGL.

Residues 68 to 70, Asn-81, 85 to 87, and Lys-95 contribute to the substrate site; these read RSG and TID.

The protein belongs to the dUTPase family. Mg(2+) serves as cofactor.

The catalysed reaction is dUTP + H2O = dUMP + diphosphate + H(+). Its pathway is pyrimidine metabolism; dUMP biosynthesis; dUMP from dCTP (dUTP route): step 2/2. Its function is as follows. This enzyme is involved in nucleotide metabolism: it produces dUMP, the immediate precursor of thymidine nucleotides and it decreases the intracellular concentration of dUTP so that uracil cannot be incorporated into DNA. In Rickettsia typhi (strain ATCC VR-144 / Wilmington), this protein is Deoxyuridine 5'-triphosphate nucleotidohydrolase.